A 257-amino-acid chain; its full sequence is 3-deoxy-manno-octulosonate cytidylyltransferase (257 aa).

The protein belongs to the KdsB family.

It localises to the cytoplasm. The catalysed reaction is 3-deoxy-alpha-D-manno-oct-2-ulosonate + CTP = CMP-3-deoxy-beta-D-manno-octulosonate + diphosphate. The protein operates within nucleotide-sugar biosynthesis; CMP-3-deoxy-D-manno-octulosonate biosynthesis; CMP-3-deoxy-D-manno-octulosonate from 3-deoxy-D-manno-octulosonate and CTP: step 1/1. It functions in the pathway bacterial outer membrane biogenesis; lipopolysaccharide biosynthesis. In terms of biological role, activates KDO (a required 8-carbon sugar) for incorporation into bacterial lipopolysaccharide in Gram-negative bacteria. The sequence is that of 3-deoxy-manno-octulosonate cytidylyltransferase from Stenotrophomonas maltophilia (strain K279a).